A 376-amino-acid chain; its full sequence is Serpin B6 (376 aa).

The residue at position 1 (methionine 1) is an N-acetylmethionine. Serine 151 carries the post-translational modification Phosphoserine. Lysine 195 is modified (N6-acetyllysine).

Belongs to the serpin family. Ov-serpin subfamily. Forms a complex with the monomeric form of beta-tryptase.

It is found in the cytoplasm. Its function is as follows. Inhibitor of cathepsin G, kallikrein-8 and thrombin. May play an important role in the inner ear in the protection against leakage of lysosomal content during stress. May be involved in the regulation of serine proteinases present in the brain or extravasated from the blood. In Pongo abelii (Sumatran orangutan), this protein is Serpin B6 (SERPINB6).